Reading from the N-terminus, the 447-residue chain is Protein CLT1, chloroplastic (447 aa).

The N-terminal 48 residues, 1 to 48 (MATTSSDRLIAGLTASIGSIESRYANPAQSVSLICRNQINGAPPIVLR), are a transit peptide targeting the chloroplast. The next 10 helical transmembrane spans lie at 103-123 (MEIV…RVLY), 135-155 (FFLA…ILYF), 172-192 (LPFL…MAAA), 200-220 (TTVL…IFLG), 228-248 (ILGC…GSGA), 256-276 (GILW…DTVM), 304-324 (IFQV…WGIP), 351-371 (GAPL…ISLL), 387-407 (TVSV…LGVA), and 413-433 (GFVA…WTPS).

It belongs to the CRT-like transporter family.

It localises to the plastid. The protein localises to the chloroplast membrane. In terms of biological role, involved in thiol transport from the plastid to the cytosol. Transports probably both glutathione (GSH) and its precursor, gamma-glutamylcysteine (gamma-EC). Exhibits some functional redundancy with CLT3 in maintaining the root GSH pool. The sequence is that of Protein CLT1, chloroplastic from Arabidopsis thaliana (Mouse-ear cress).